A 503-amino-acid polypeptide reads, in one-letter code: Efflux pump vrtL (503 aa).

Positions 1–59 are disordered; the sequence is MSKLSDNHSSASEGEKEAGDLESGPTAISSEPSFDDADRDPNLITWDGPKDPENPKNWP. A glycan (N-linked (GlcNAc...) asparagine) is linked at Asn-7. 12 helical membrane-spanning segments follow: residues 68 to 88, 101 to 121, 133 to 153, 162 to 182, 194 to 214, 221 to 241, 295 to 315, 329 to 349, 377 to 397, 401 to 421, 432 to 454, and 471 to 491; these read WTVSLFVFISPVSSSMIAPAM, IEIYLSLSIFILAYSIGPIFF, LLQISNVWYLAWNLGCGFATT, FLAGIGGSAPLAIGGGAISDM, VYTLGPLLGPVVGPIAGGFIA, WVFWSTSAAALAVQVVGFFWL, IVFCMAIYMAYLFGISYLMFA, PGIGGLNYLSIAIGSFIGLFF, SLAVGSVISTIGLFWYGWSIG, WIMPNIGALIFAMGTISCLQG, TYAASAMAACAVLRSLCGFGFPL, and LLAFITMVVGWGAPFAFWHFG.

The protein belongs to the major facilitator superfamily.

The protein resides in the membrane. In terms of biological role, efflux pump; part of the gene cluster that mediates the biosynthesis of viridicatumtoxin, a tetracycline-like fungal meroterpenoid with a unique, fused spirobicyclic ring system. The polypeptide is Efflux pump vrtL (Penicillium aethiopicum).